The following is a 219-amino-acid chain: MITLLHIDTSARRTDNDVKEYNSISKSLAAHFMDKWITLNSKDKVIYRDLGLNPPDFISQDWIAAVFTPDEKQSEEQKSLLTLSDTLIDEVDQADIIVISSPMYNYGMPAVLKAWFDQVVRINKTFTFDLARGDFPIEPIMSGKKLILISSSGEFGFEIGGIREKMNYLAPHVETASKYLGVEEFYEIKSEYQEFADARHEESLSNAYRGVEELVKQLV.

Residues S10 and 23–25 (SIS) each bind FMN.

This sequence belongs to the azoreductase type 1 family. Homodimer. FMN serves as cofactor.

It catalyses the reaction 2 a quinone + NADH + H(+) = 2 a 1,4-benzosemiquinone + NAD(+). It carries out the reaction N,N-dimethyl-1,4-phenylenediamine + anthranilate + 2 NAD(+) = 2-(4-dimethylaminophenyl)diazenylbenzoate + 2 NADH + 2 H(+). Its function is as follows. Quinone reductase that provides resistance to thiol-specific stress caused by electrophilic quinones. Also exhibits azoreductase activity. Catalyzes the reductive cleavage of the azo bond in aromatic azo compounds to the corresponding amines. This chain is FMN-dependent NADH:quinone oxidoreductase 2, found in Colwellia psychrerythraea (strain 34H / ATCC BAA-681) (Vibrio psychroerythus).